Consider the following 211-residue polypeptide: Ribonuclease HII (211 aa).

Residues 17–211 (FLSAGVDEVG…CQPSLFEVRS (195 aa)) form the RNase H type-2 domain. Residues D23, E24, and D119 each coordinate a divalent metal cation.

The protein belongs to the RNase HII family. Mn(2+) is required as a cofactor. Requires Mg(2+) as cofactor.

It localises to the cytoplasm. It carries out the reaction Endonucleolytic cleavage to 5'-phosphomonoester.. In terms of biological role, endonuclease that specifically degrades the RNA of RNA-DNA hybrids. The sequence is that of Ribonuclease HII from Trichodesmium erythraeum (strain IMS101).